The chain runs to 88 residues: Small ribosomal subunit protein bS20 (88 aa).

This sequence belongs to the bacterial ribosomal protein bS20 family.

Binds directly to 16S ribosomal RNA. The chain is Small ribosomal subunit protein bS20 from Rhodopseudomonas palustris (strain BisB18).